Consider the following 369-residue polypeptide: Anhydro-N-acetylmuramic acid kinase (369 aa).

12–19 contributes to the ATP binding site; the sequence is GTSMDGVD.

The protein belongs to the anhydro-N-acetylmuramic acid kinase family.

It carries out the reaction 1,6-anhydro-N-acetyl-beta-muramate + ATP + H2O = N-acetyl-D-muramate 6-phosphate + ADP + H(+). It functions in the pathway amino-sugar metabolism; 1,6-anhydro-N-acetylmuramate degradation. It participates in cell wall biogenesis; peptidoglycan recycling. In terms of biological role, catalyzes the specific phosphorylation of 1,6-anhydro-N-acetylmuramic acid (anhMurNAc) with the simultaneous cleavage of the 1,6-anhydro ring, generating MurNAc-6-P. Is required for the utilization of anhMurNAc either imported from the medium or derived from its own cell wall murein, and thus plays a role in cell wall recycling. The sequence is that of Anhydro-N-acetylmuramic acid kinase from Shewanella baltica (strain OS223).